Reading from the N-terminus, the 86-residue chain is Superoxide dismutase [Cu-Zn] (86 aa).

Positions 1-26 are disordered; it reads AKEKGGKLTAGLAAGGHWNPNKAPHH. A compositionally biased stretch (low complexity) spans 7–16; the sequence is KLTAGLAAGG. H17 provides a ligand contact to Cu cation. Zn(2+)-binding residues include H17, H26, H35, and D38. H73 serves as a coordination point for Cu cation.

It belongs to the Cu-Zn superoxide dismutase family. As to quaternary structure, homodimer. Cu cation serves as cofactor. It depends on Zn(2+) as a cofactor.

It localises to the periplasm. The enzyme catalyses 2 superoxide + 2 H(+) = H2O2 + O2. Destroys radicals which are normally produced within the cells and which are toxic to biological systems. The polypeptide is Superoxide dismutase [Cu-Zn] (sodC) (Mannheimia haemolytica (Pasteurella haemolytica)).